The primary structure comprises 149 residues: Large ribosomal subunit protein bL9 (149 aa).

The protein belongs to the bacterial ribosomal protein bL9 family.

In terms of biological role, binds to the 23S rRNA. This is Large ribosomal subunit protein bL9 from Geobacillus sp. (strain WCH70).